The chain runs to 795 residues: Endoplasmin (795 aa).

The N-terminal stretch at 1–21 is a signal peptide; it reads MKSAWALALACTLLLAASVTA. Residues 41–43 carry the SRT pseudosubstrate motif motif; the sequence is SRT. 2 N-linked (GlcNAc...) asparagine glycosylation sites follow: asparagine 61 and asparagine 106. ATP contacts are provided by asparagine 106, aspartate 148, asparagine 161, and phenylalanine 198. Asparagine 216 carries an N-linked (GlcNAc...) asparagine glycan. Residues 289–316 show a composition bias toward acidic residues; sequence EEPVEEEEAKEEKEETDDNEAAVEEEEE. The segment at 289–322 is disordered; that stretch reads EEPVEEEEAKEEKEETDDNEAAVEEEEEEKKPKT. N-linked (GlcNAc...) asparagine glycosylation is found at asparagine 444, asparagine 480, and asparagine 501. A disordered region spans residues 751–795; that stretch reads DAKVEEEPEEPEDAAEEAEQDEEEVDADAEDSETQKESTDVKDEL. Over residues 756–782 the composition is skewed to acidic residues; that stretch reads EEPEEPEDAAEEAEQDEEEVDADAEDS. Residues 783 to 795 are compositionally biased toward basic and acidic residues; that stretch reads ETQKESTDVKDEL. The short motif at 792–795 is the Prevents secretion from ER element; the sequence is KDEL.

Belongs to the heat shock protein 90 family. As to quaternary structure, homodimer; disulfide-linked.

The protein resides in the endoplasmic reticulum lumen. The protein localises to the sarcoplasmic reticulum lumen. The catalysed reaction is ATP + H2O = ADP + phosphate + H(+). ATP-dependent chaperone involved in the processing of proteins in the endoplasmic reticulum, regulating their transport. The polypeptide is Endoplasmin (HSP90B1) (Gallus gallus (Chicken)).